Reading from the N-terminus, the 135-residue chain is Protein PsiE homolog (135 aa).

Transmembrane regions (helical) follow at residues 20 to 40, 54 to 74, 82 to 102, and 107 to 127; these read VGLLLLAAILIVFLVKETIHL, YLLIEGIVIYFLYFEFIALIV, HFPLRYFIYIGITAIIRLIIV, and PIDTLIYSAAILLLVVTLYLA.

The protein belongs to the PsiE family.

The protein localises to the cell inner membrane. This Serratia proteamaculans (strain 568) protein is Protein PsiE homolog.